A 561-amino-acid polypeptide reads, in one-letter code: Melanopsin-A (561 aa).

Residues 1 to 34 lie on the Extracellular side of the membrane; that stretch reads MRPSTDTMEADTAATHRNFITKVDVPDHAHYTVA. The chain crosses the membrane as a helical span at residues 35 to 55; that stretch reads FFVSVIGTLGVTGNALVQFAF. Residues 56 to 68 lie on the Cytoplasmic side of the membrane; sequence YSNKKLRNLPNYF. Residues 69-89 traverse the membrane as a helical segment; sequence IMNQAASDFLMAFTQSPFFFI. At 90-104 the chain is on the extracellular side; the sequence is NCLNREWIFGELGCK. C103 and C181 are oxidised to a cystine. The chain crosses the membrane as a helical span at residues 105-125; that stretch reads LYAFLGALFGITSMINLLAIS. At 126-148 the chain is on the cytoplasmic side; sequence LDRYMVITRPLEAMKWNSKRRTT. A helical transmembrane segment spans residues 149-169; it reads IAILLVWLYSLAWSLAPLVGW. Over 170–201 the chain is Extracellular; it reads SSYIPEGLRTSCTWDYVTYTASNRSYTMMLCC. Residue N192 is glycosylated (N-linked (GlcNAc...) asparagine). A helical transmembrane segment spans residues 202-222; it reads FVFFIPLAIISYCYLFMFLAI. Residues 223 to 255 lie on the Cytoplasmic side of the membrane; the sequence is RKTSRDVERLGIQVRKSTIIRQKSIRTEWKLAK. Residues 256–276 form a helical membrane-spanning segment; sequence IAFVVIVVYVLSWSPYACVTM. The Extracellular segment spans residues 277 to 291; that stretch reads ISWSGHANILSPYSK. Residues 292-312 form a helical membrane-spanning segment; sequence TVPAVIAKASTIYNPFIYAII. K299 is subject to N6-(retinylidene)lysine. Residues 313-561 are Cytoplasmic-facing; the sequence is HQKYRKTLAD…EDSLEDNDVV (249 aa). Disordered stretches follow at residues 359–385, 404–448, 479–503, and 539–561; these read AIRR…SYSS, ASFR…SATH, NGLS…SKSA, and SFTD…NDVV. The segment covering 371-385 has biased composition (low complexity); it reads ASASKTAAGASSYSS. Residues 550–561 show a composition bias toward acidic residues; it reads VDEDSLEDNDVV.

It belongs to the G-protein coupled receptor 1 family. Opsin subfamily. Expressed in retina and brain. Expressed in a subset of retinal horizontal cells as well as a small number of amacrine and retinal ganglion cells. Also expressed in a small population of neurons in the suprachiasmatic nucleus (SNC).

The protein resides in the cell membrane. Functionally, photoreceptor implicated in non-image-forming responses to light. The protein is Melanopsin-A (opn4a) of Gadus morhua (Atlantic cod).